Consider the following 511-residue polypeptide: Maturase K (511 aa).

Belongs to the intron maturase 2 family. MatK subfamily.

The protein resides in the plastid. Its subcellular location is the chloroplast. Functionally, usually encoded in the trnK tRNA gene intron. Probably assists in splicing its own and other chloroplast group II introns. The sequence is that of Maturase K from Mandragora officinarum (Mandrake).